A 516-amino-acid chain; its full sequence is Cilia- and flagella-associated protein 53 (516 aa).

2 coiled-coil regions span residues 217–283 and 316–440; these read EEKK…LQVK and MQGY…RQMK. 2 stretches are compositionally biased toward basic and acidic residues: residues 417–436 and 461–472; these read KELL…DRNA and QAEREEEQREFE. Disordered stretches follow at residues 417–443 and 455–475; these read KELL…KVAQ and YQQS…EAGL.

It belongs to the CFAP53 family.

It localises to the cytoplasm. The protein resides in the cytoskeleton. It is found in the cilium axoneme. The protein localises to the microtubule organizing center. Its subcellular location is the centrosome. It localises to the centriolar satellite. Microtubule inner protein (MIP) part of the dynein-decorated doublet microtubules (DMTs) in cilia axoneme, which is required for motile cilia beating. Regulates motility patterns of both 9+0 and 9+2 motile cilia through differential localization and recruitment of axonemal dynein components. Required for motile cilium formation and movement. Involved in the establishment of left-right symmetry during embryogenesis. The protein is Cilia- and flagella-associated protein 53 of Xenopus laevis (African clawed frog).